The chain runs to 369 residues: Probable dual-specificity RNA methyltransferase RlmN (369 aa).

The active-site Proton acceptor is the Glu108. One can recognise a Radical SAM core domain in the interval 114-351; sequence YPDRATLCIS…IAQGVSCTVR (238 aa). A disulfide bond links Cys121 and Cys362. The [4Fe-4S] cluster site is built by Cys128, Cys132, and Cys135. Residues 183-184, Ser217, 240-242, and Asn319 each bind S-adenosyl-L-methionine; these read GE and SLH. The active-site S-methylcysteine intermediate is Cys362.

It belongs to the radical SAM superfamily. RlmN family. [4Fe-4S] cluster is required as a cofactor.

The protein localises to the cytoplasm. It catalyses the reaction adenosine(2503) in 23S rRNA + 2 reduced [2Fe-2S]-[ferredoxin] + 2 S-adenosyl-L-methionine = 2-methyladenosine(2503) in 23S rRNA + 5'-deoxyadenosine + L-methionine + 2 oxidized [2Fe-2S]-[ferredoxin] + S-adenosyl-L-homocysteine. The enzyme catalyses adenosine(37) in tRNA + 2 reduced [2Fe-2S]-[ferredoxin] + 2 S-adenosyl-L-methionine = 2-methyladenosine(37) in tRNA + 5'-deoxyadenosine + L-methionine + 2 oxidized [2Fe-2S]-[ferredoxin] + S-adenosyl-L-homocysteine. Specifically methylates position 2 of adenine 2503 in 23S rRNA and position 2 of adenine 37 in tRNAs. The protein is Probable dual-specificity RNA methyltransferase RlmN of Rhodococcus erythropolis (strain PR4 / NBRC 100887).